Consider the following 289-residue polypeptide: Metal-staphylopine import system permease protein CntC (289 aa).

5 helical membrane passes run 13-33 (AVIA…APLV), 77-97 (LLYV…LGFL), 115-135 (VMLA…FGMG), 194-214 (IAII…GFSF), and 249-269 (IAIV…QIAI). In terms of domain architecture, ABC transmembrane type-1 spans 73–262 (IRPSLLYVFV…IIVMAFNFLS (190 aa)).

It belongs to the binding-protein-dependent transport system permease family. The complex is composed of two ATP-binding proteins (CntD and CntF), two transmembrane proteins (CntB and CntC) and a solute-binding protein (CntA).

The protein localises to the cell membrane. Its function is as follows. Part of the ABC transporter complex CntABCDF (Opp1) involved in the uptake of metal in complex with the metallophore staphylopine (StP). May be involved in the import of a large array of divalent metals ions such as nickel, cobalt, zinc, copper and iron. Probably responsible for the translocation of the substrate across the membrane. The protein is Metal-staphylopine import system permease protein CntC of Staphylococcus aureus (strain Mu50 / ATCC 700699).